The following is a 453-amino-acid chain: Ribosome biogenesis protein YTM1 (453 aa).

Residues 19–102 (VKVRFFTNEE…ETVIDLQYTR (84 aa)) are ubiquitin-like (UBL) domain. A sufficient for interaction with ERB1 and association with 66S pre-ribosomes region spans residues 112–453 (SFTNEDWISS…KKIDIYREAN (342 aa)). 7 WD repeats span residues 128 to 166 (GHGA…ESQY), 168 to 206 (GHSG…VEEG), 218 to 257 (GHKG…MSAV), 292 to 332 (GHGQ…CVDT), 334 to 373 (STGF…STEQ), 380 to 420 (GHTN…AMYT), and 422 to 453 (GKGG…REAN).

The protein belongs to the WD repeat WDR12/YTM1 family. As to quaternary structure, component of the NOP7 complex, composed of ERB1, NOP7 and YTM1. The complex is held together by ERB1, which interacts with NOP7 via its N-terminal domain and with YTM1 via a high-affinity interaction between the seven-bladed beta-propeller domains of the 2 proteins. The NOP7 complex associates with the 66S pre-ribosome. Interacts (via UBL domain) with MDN1 (via VWFA/MIDAS domain).

Its subcellular location is the nucleus. It localises to the nucleolus. The protein resides in the nucleoplasm. Functionally, component of the NOP7 complex, which is required for maturation of the 25S and 5.8S ribosomal RNAs and formation of the 60S ribosome. The sequence is that of Ribosome biogenesis protein YTM1 from Meyerozyma guilliermondii (strain ATCC 6260 / CBS 566 / DSM 6381 / JCM 1539 / NBRC 10279 / NRRL Y-324) (Yeast).